The chain runs to 470 residues: Acetyl-CoA decarbonylase/synthase complex subunit beta 2 (470 aa).

[Ni-Fe-S] cluster-binding residues include Cys189, Cys192, Cys278, and Cys280.

The protein belongs to the CdhC family. Monomer. The ACDS complex is made up of alpha, epsilon, beta, gamma and delta chains with a probable stoichiometry of (alpha(2)epsilon(2))(4)-beta(8)-(gamma(1)delta(1))(8) (Potential). It depends on [Ni-Fe-S] cluster as a cofactor.

The enzyme catalyses Co(I)-[corrinoid Fe-S protein] + acetyl-CoA + H(+) = methyl-Co(III)-[corrinoid Fe-S protein] + CO + CoA. Its pathway is one-carbon metabolism; methanogenesis from acetate. Part of a complex that catalyzes the reversible cleavage of acetyl-CoA, allowing growth on acetate as sole source of carbon and energy. The alpha-epsilon complex generates CO from CO(2), while the beta subunit (this protein) combines the CO with CoA and a methyl group to form acetyl-CoA. The methyl group, which is incorporated into acetyl-CoA, is transferred to the beta subunit by a corrinoid iron-sulfur protein (the gamma-delta complex). This is Acetyl-CoA decarbonylase/synthase complex subunit beta 2 (cdhC2) from Methanosarcina acetivorans (strain ATCC 35395 / DSM 2834 / JCM 12185 / C2A).